Here is a 274-residue protein sequence, read N- to C-terminus: Diaminopimelate epimerase (274 aa).

Positions 11, 44, and 64 each coordinate substrate. The active-site Proton donor is the cysteine 73. Substrate contacts are provided by residues 74-75, asparagine 157, asparagine 190, and 208-209; these read GN and ER. Cysteine 217 serves as the catalytic Proton acceptor. 218–219 contacts substrate; sequence GS.

Belongs to the diaminopimelate epimerase family. As to quaternary structure, homodimer.

It is found in the cytoplasm. It carries out the reaction (2S,6S)-2,6-diaminopimelate = meso-2,6-diaminopimelate. It functions in the pathway amino-acid biosynthesis; L-lysine biosynthesis via DAP pathway; DL-2,6-diaminopimelate from LL-2,6-diaminopimelate: step 1/1. Its function is as follows. Catalyzes the stereoinversion of LL-2,6-diaminopimelate (L,L-DAP) to meso-diaminopimelate (meso-DAP), a precursor of L-lysine and an essential component of the bacterial peptidoglycan. The protein is Diaminopimelate epimerase of Proteus mirabilis (strain HI4320).